We begin with the raw amino-acid sequence, 199 residues long: Probable chemoreceptor glutamine deamidase CheD (199 aa).

The protein belongs to the CheD family.

The enzyme catalyses L-glutaminyl-[protein] + H2O = L-glutamyl-[protein] + NH4(+). In terms of biological role, probably deamidates glutamine residues to glutamate on methyl-accepting chemotaxis receptors (MCPs), playing an important role in chemotaxis. The polypeptide is Probable chemoreceptor glutamine deamidase CheD (Cereibacter sphaeroides (strain ATCC 17029 / ATH 2.4.9) (Rhodobacter sphaeroides)).